We begin with the raw amino-acid sequence, 97 residues long: Co-chaperonin GroES (97 aa).

This sequence belongs to the GroES chaperonin family. Heptamer of 7 subunits arranged in a ring. Interacts with the chaperonin GroEL.

Its subcellular location is the cytoplasm. Together with the chaperonin GroEL, plays an essential role in assisting protein folding. The GroEL-GroES system forms a nano-cage that allows encapsulation of the non-native substrate proteins and provides a physical environment optimized to promote and accelerate protein folding. GroES binds to the apical surface of the GroEL ring, thereby capping the opening of the GroEL channel. The protein is Co-chaperonin GroES of Klebsiella pneumoniae (strain 342).